A 330-amino-acid chain; its full sequence is MDPSTLFLLLIIAAGIILLAVFFTFVPVMLWISALAAGVKISIFTLIGMRLRRVIPNRVVNPLIKAHKAGLDVAINQLESHYLAGGNVDRVVNALIAAQRANIELTFARCAAIDLAGRDVLEAVQMSVNPKVIETPFIAGVAMDGIEVKAKARITVRANIDRLVGGAGEETIIARVGEGIVSTIGSSDNHKKVLENPDMISQTVLSKGLDSGTAFEILSIDIADVDIGKNIGAILQTDQAEADKNIAQAKAEERRAMAVAQEQEMRARVEEMRAKVVEAEAEVPLAMSEALRSGKIGVMDYLNMKNIDADTDMRDSFGKMTKDQNEEDHK.

Helical transmembrane passes span 6–26 (LFLL…FTFV) and 28–48 (VMLW…TLIG).

The protein belongs to the flotillin-like FloA family. As to quaternary structure, homooligomerizes.

The protein resides in the cell membrane. Its subcellular location is the membrane raft. Functionally, found in functional membrane microdomains (FMM) that may be equivalent to eukaryotic membrane rafts. FMMs are highly dynamic and increase in number as cells age. Flotillins are thought to be important factors in membrane fluidity. In Bacillus licheniformis (strain ATCC 14580 / DSM 13 / JCM 2505 / CCUG 7422 / NBRC 12200 / NCIMB 9375 / NCTC 10341 / NRRL NRS-1264 / Gibson 46), this protein is Flotillin-like protein FloA.